The chain runs to 210 residues: Protein-methionine-sulfoxide reductase heme-binding subunit MsrQ (210 aa).

6 helical membrane passes run 8–28 (LAVF…AWIF), 37–57 (VLVE…LSMT), 75–95 (LGLW…LFIL), 110–130 (PYII…VTSN), 147–167 (IIYV…RADL), and 169–189 (EWAL…PVFA).

Belongs to the MsrQ family. Heterodimer of a catalytic subunit (MsrP) and a heme-binding subunit (MsrQ). The cofactor is FMN. Heme b is required as a cofactor.

Its subcellular location is the cell inner membrane. Part of the MsrPQ system that repairs oxidized periplasmic proteins containing methionine sulfoxide residues (Met-O), using respiratory chain electrons. Thus protects these proteins from oxidative-stress damage caused by reactive species of oxygen and chlorine generated by the host defense mechanisms. MsrPQ is essential for the maintenance of envelope integrity under bleach stress, rescuing a wide series of structurally unrelated periplasmic proteins from methionine oxidation. MsrQ provides electrons for reduction to the reductase catalytic subunit MsrP, using the quinone pool of the respiratory chain. The chain is Protein-methionine-sulfoxide reductase heme-binding subunit MsrQ from Pseudomonas syringae pv. syringae (strain B728a).